We begin with the raw amino-acid sequence, 421 residues long: Serine--tRNA ligase (421 aa).

Residue 227-229 (TSE) participates in L-serine binding. ATP-binding positions include 257–259 (RRE) and valine 273. Residue glutamate 280 participates in L-serine binding. 344–347 (ELTS) contributes to the ATP binding site. Threonine 379 contacts L-serine.

It belongs to the class-II aminoacyl-tRNA synthetase family. Type-1 seryl-tRNA synthetase subfamily. In terms of assembly, homodimer. The tRNA molecule binds across the dimer.

Its subcellular location is the cytoplasm. The enzyme catalyses tRNA(Ser) + L-serine + ATP = L-seryl-tRNA(Ser) + AMP + diphosphate + H(+). It catalyses the reaction tRNA(Sec) + L-serine + ATP = L-seryl-tRNA(Sec) + AMP + diphosphate + H(+). It participates in aminoacyl-tRNA biosynthesis; selenocysteinyl-tRNA(Sec) biosynthesis; L-seryl-tRNA(Sec) from L-serine and tRNA(Sec): step 1/1. Functionally, catalyzes the attachment of serine to tRNA(Ser). Is also able to aminoacylate tRNA(Sec) with serine, to form the misacylated tRNA L-seryl-tRNA(Sec), which will be further converted into selenocysteinyl-tRNA(Sec). The sequence is that of Serine--tRNA ligase from Leifsonia xyli subsp. xyli (strain CTCB07).